The sequence spans 77 residues: Secapin (77 aa).

Positions methionine 1–alanine 32 are cleaved as a signal peptide. The propeptide occupies valine 33–arginine 52. A disulfide bridge connects residues cysteine 61 and cysteine 72.

It belongs to the secapin family. In terms of tissue distribution, expressed by the venom gland.

It localises to the secreted. Nontoxic peptide. In Apis cerana cerana (Oriental honeybee), this protein is Secapin.